Consider the following 500-residue polypeptide: Probable malate:quinone oxidoreductase (500 aa).

Belongs to the MQO family. Requires FAD as cofactor.

It catalyses the reaction (S)-malate + a quinone = a quinol + oxaloacetate. The protein operates within carbohydrate metabolism; tricarboxylic acid cycle; oxaloacetate from (S)-malate (quinone route): step 1/1. In Corynebacterium glutamicum (strain R), this protein is Probable malate:quinone oxidoreductase.